We begin with the raw amino-acid sequence, 340 residues long: UDP-3-O-(3-hydroxymyristoyl)glucosamine N-acyltransferase (340 aa).

Catalysis depends on histidine 239, which acts as the Proton acceptor.

Belongs to the transferase hexapeptide repeat family. LpxD subfamily. In terms of assembly, homotrimer.

It catalyses the reaction a UDP-3-O-[(3R)-3-hydroxyacyl]-alpha-D-glucosamine + a (3R)-hydroxyacyl-[ACP] = a UDP-2-N,3-O-bis[(3R)-3-hydroxyacyl]-alpha-D-glucosamine + holo-[ACP] + H(+). The enzyme catalyses UDP-3-O-[(3R)-3-hydroxytetradecanoyl]-alpha-D-glucosamine + (3R)-hydroxytetradecanoyl-[ACP] = UDP-2-N,3-O-bis[(3R)-3-hydroxytetradecanoyl]-alpha-D-glucosamine + holo-[ACP] + H(+). The protein operates within glycolipid biosynthesis; lipid IV(A) biosynthesis; lipid IV(A) from (3R)-3-hydroxytetradecanoyl-[acyl-carrier-protein] and UDP-N-acetyl-alpha-D-glucosamine: step 3/6. In terms of biological role, catalyzes the N-acylation of UDP-3-O-(hydroxytetradecanoyl)glucosamine using 3-hydroxytetradecanoyl-ACP as the acyl donor. Is involved in the biosynthesis of lipid A, a phosphorylated glycolipid that anchors the lipopolysaccharide to the outer membrane of the cell. The chain is UDP-3-O-(3-hydroxymyristoyl)glucosamine N-acyltransferase from Yersinia pestis bv. Antiqua (strain Antiqua).